An 855-amino-acid chain; its full sequence is Endochitinase 2 (855 aa).

Residues 1–22 (MGPTNILAAFIAVSSLFIQSLA) form the signal peptide. The 312-residue stretch at 29 to 340 (SNLAVYWGQG…DIMKEVLLRC (312 aa)) folds into the GH18 domain. A glycan (N-linked (GlcNAc...) asparagine) is linked at Asn90. Glu175 functions as the Proton donor in the catalytic mechanism. A disordered region spans residues 341-672 (DPDPPTSTVT…APSSSTTEDR (332 aa)). Residues 346–400 (TSTVTSTTSASTSTQTSSQSTTMETKTLSASTTPSSPSTVSPSSTMQTTSTGSTS) show a composition bias toward low complexity. Residues 401–456 (IETVTTRSQEPPSTTISTRSASTEPVTTRSQEPPSTTISTRSASTETVTTRSQEPP) show a composition bias toward polar residues. A compositionally biased stretch (low complexity) spans 457-483 (STTISTWSASTETSTSSQDSPSTTIST). The segment covering 484–521 (KSAPTGTVTTRSQDLPSTTISTRSPETETETATTKSQG) has biased composition (polar residues). Residues 522–533 (SPSITLSTRSSS) are compositionally biased toward low complexity. Residues 534 to 555 (AETVSTRSQHSSSTTISTKSAP) show a composition bias toward polar residues. A compositionally biased stretch (low complexity) spans 556 to 567 (TETGTTSEHSTS). Residues 568–641 (MPVSTRSAST…SQTPTTIITG (74 aa)) show a composition bias toward polar residues. 2 stretches are compositionally biased toward low complexity: residues 642–652 (TPSDPVSAPTT) and 659–672 (TLTL…TEDR). A lipid anchor (GPI-anchor amidated glycine) is attached at Gly826. Residues 827–855 (SAMTVRSMDVVAKALITAGAAVLGLFLGL) constitute a propeptide, removed in mature form.

Belongs to the glycosyl hydrolase 18 family. Chitinase class III subfamily.

It localises to the cell membrane. The enzyme catalyses Random endo-hydrolysis of N-acetyl-beta-D-glucosaminide (1-&gt;4)-beta-linkages in chitin and chitodextrins.. Its function is as follows. May be associated with endosporulation. This Coccidioides posadasii (strain C735) (Valley fever fungus) protein is Endochitinase 2 (CTS2).